Here is a 351-residue protein sequence, read N- to C-terminus: Quinolinate phosphoribosyltransferase [decarboxylating] 2b, mitochondrial (351 aa).

Substrate is bound by residues R142, 173–175 (TRK), R197, K207, E240, D267, 299–301 (SGN), and 320–322 (SGA).

Belongs to the NadC/ModD family. As to expression, expressed in roots and flowers.

Its subcellular location is the mitochondrion. It carries out the reaction nicotinate beta-D-ribonucleotide + CO2 + diphosphate = quinolinate + 5-phospho-alpha-D-ribose 1-diphosphate + 2 H(+). The protein operates within alkaloid biosynthesis; nicotine biosynthesis. It participates in cofactor biosynthesis; NAD(+) biosynthesis; nicotinate D-ribonucleotide from quinolinate: step 1/1. In terms of biological role, involved in the biosynthesis of pyridine alkaloid natural products, leading mainly to the production of anabasine, anatabine, nicotine and nornicotine, effective deterrents against herbivores with antiparasitic and pesticide properties (neurotoxins); nornicotine serves as the precursor in the synthesis of the carcinogen compound N'-nitrosonornicotine (NNN). Involved in the catabolism of quinolinic acid (QA). The polypeptide is Quinolinate phosphoribosyltransferase [decarboxylating] 2b, mitochondrial (Nicotiana tabacum (Common tobacco)).